The chain runs to 298 residues: Ribosomal RNA small subunit methyltransferase H (298 aa).

S-adenosyl-L-methionine-binding positions include 35–37 (GGH), Asp-55, Phe-82, Asp-100, and Gln-107.

Belongs to the methyltransferase superfamily. RsmH family.

It localises to the cytoplasm. It catalyses the reaction cytidine(1402) in 16S rRNA + S-adenosyl-L-methionine = N(4)-methylcytidine(1402) in 16S rRNA + S-adenosyl-L-homocysteine + H(+). Its function is as follows. Specifically methylates the N4 position of cytidine in position 1402 (C1402) of 16S rRNA. This is Ribosomal RNA small subunit methyltransferase H from Chlamydia abortus (strain DSM 27085 / S26/3) (Chlamydophila abortus).